A 597-amino-acid chain; its full sequence is Electron transfer flavoprotein-ubiquinone oxidoreductase, mitochondrial (597 aa).

Residue 53–67 coordinates FAD; that stretch reads VVIVGGGPSGLSAAI. An intramembrane segment occupies 91-112; it reads IGGHTLSGAVIETRALDELIPN. 2 residues coordinate a ubiquinone: Gly285 and Gly286. An intramembrane segment occupies 409-426; that stretch reads IDPATYDKNIRDTYVVKE. Residues Cys540, Cys566, Cys569, and Cys572 each contribute to the [4Fe-4S] cluster site. In terms of domain architecture, 4Fe-4S ferredoxin-type spans 557-586; the sequence is KRLQINAQNCIHCKTCDIKDPQQNINWVTP.

It belongs to the ETF-QO/FixC family. In terms of assembly, monomer. [4Fe-4S] cluster serves as cofactor. The cofactor is FAD.

The protein localises to the mitochondrion inner membrane. It carries out the reaction a ubiquinone + reduced [electron-transfer flavoprotein] = a ubiquinol + oxidized [electron-transfer flavoprotein] + H(+). Accepts electrons from ETF and reduces ubiquinone. The polypeptide is Electron transfer flavoprotein-ubiquinone oxidoreductase, mitochondrial (let-721) (Caenorhabditis elegans).